Consider the following 684-residue polypeptide: Extracellular lipase (684 aa).

Residues 1–48 (MKKKLIYAAVVSALLAGCGGSDDNKGDTSSYLDYLLTGSNAVGPSALA) form the signal peptide. Disordered regions lie at residues 321–405 (SIPV…ADWG) and 462–493 (QRERLRPGAGPDLEDLCRHAGGQEGGAGGDRS). Residues 385 to 405 (ADCRSDPPERAAGRGEQADWG) are compositionally biased toward basic and acidic residues. The active-site Nucleophile is the S568.

This sequence belongs to the AB hydrolase superfamily. Lipase family. As to quaternary structure, monomer.

It localises to the secreted. It carries out the reaction a triacylglycerol + H2O = a diacylglycerol + a fatty acid + H(+). Its function is as follows. The optimum chain lengths for the acyl moiety is C6 for ester hydrolysis and C6 and C8 for triacylglycerol hydrolysis. In Aeromonas hydrophila, this protein is Extracellular lipase.